Reading from the N-terminus, the 34-residue chain is Photosystem II reaction center protein M (34 aa).

The helical transmembrane segment at 5–25 (ILGLMAVALFILIPTSFLLIL) threads the bilayer.

This sequence belongs to the PsbM family. In terms of assembly, PSII is composed of 1 copy each of membrane proteins PsbA, PsbB, PsbC, PsbD, PsbE, PsbF, PsbH, PsbI, PsbJ, PsbK, PsbL, PsbM, PsbT, PsbX, PsbY, PsbZ, Psb30/Ycf12, at least 3 peripheral proteins of the oxygen-evolving complex and a large number of cofactors. It forms dimeric complexes.

The protein resides in the plastid. It is found in the chloroplast thylakoid membrane. In terms of biological role, one of the components of the core complex of photosystem II (PSII). PSII is a light-driven water:plastoquinone oxidoreductase that uses light energy to abstract electrons from H(2)O, generating O(2) and a proton gradient subsequently used for ATP formation. It consists of a core antenna complex that captures photons, and an electron transfer chain that converts photonic excitation into a charge separation. This subunit is found at the monomer-monomer interface. This Tupiella akineta (Green alga) protein is Photosystem II reaction center protein M.